We begin with the raw amino-acid sequence, 319 residues long: 2-oxoglutarate and iron-dependent oxygenase domain-containing protein 3 (319 aa).

The disordered stretch occupies residues 1-34; it reads MAPQRRAATKAPEGNGAAERRNRSSTKKDRAPRE. Residues 1 to 42 lie on the Cytoplasmic side of the membrane; that stretch reads MAPQRRAATKAPEGNGAAERRNRSSTKKDRAPREVQRLWQRP. The segment covering 18-34 has biased composition (basic and acidic residues); that stretch reads AERRNRSSTKKDRAPRE. A helical; Signal-anchor for type II membrane protein transmembrane segment spans residues 43–65; it reads WLRTAGLGAGFVLTALLLWSSLG. Over 66–319 the chain is Lumenal; that stretch reads ADDGVAEVLA…DHGIEDPAFP (254 aa). A Fe2OG dioxygenase domain is found at 207 to 309; that stretch reads KPTFFSRINS…AITIAFSCNP (103 aa). N-linked (GlcNAc...) asparagine glycosylation occurs at N215. Fe cation is bound by residues H230, D232, and H288. The active site involves R298. R298 provides a ligand contact to 2-oxoglutarate.

It belongs to the OGFOD3 family. It depends on Fe(2+) as a cofactor. L-ascorbate serves as cofactor.

It is found in the membrane. This chain is 2-oxoglutarate and iron-dependent oxygenase domain-containing protein 3 (OGFOD3), found in Homo sapiens (Human).